The primary structure comprises 235 residues: Meiotically up-regulated gene 123 protein (235 aa).

Residues 1 to 14 show a composition bias toward basic and acidic residues; the sequence is MERLATRSSHDDPY. Disordered regions lie at residues 1–34, 58–83, and 169–235; these read MERL…SNGS, PLHS…GGMR, and SRAD…FDSD. The span at 15-34 shows a compositional bias: polar residues; that stretch reads SRSSLPTSNAINSNHESNGS. The segment covering 61–77 has biased composition (low complexity); the sequence is SSPSIKSSSQNGKSSSK. Over residues 176–202 the composition is skewed to polar residues; sequence ETTQSDGFESRSGSPTHDIQSYLVNRR. 3 positions are modified to phosphoserine: Ser180, Ser187, and Ser189. Thr191 bears the Phosphothreonine mark.

It localises to the cytoplasm. Its subcellular location is the nucleus. Functionally, involved in sporulation and has a role in meiosis. This chain is Meiotically up-regulated gene 123 protein (mug123), found in Schizosaccharomyces pombe (strain 972 / ATCC 24843) (Fission yeast).